A 309-amino-acid chain; its full sequence is 4-hydroxy-3-methylbut-2-enyl diphosphate reductase (309 aa).

Cys12 provides a ligand contact to [4Fe-4S] cluster. The (2E)-4-hydroxy-3-methylbut-2-enyl diphosphate site is built by His43 and His77. His43 and His77 together coordinate dimethylallyl diphosphate. Residues His43 and His77 each contribute to the isopentenyl diphosphate site. Cys99 is a [4Fe-4S] cluster binding site. His127 lines the (2E)-4-hydroxy-3-methylbut-2-enyl diphosphate pocket. Position 127 (His127) interacts with dimethylallyl diphosphate. Residue His127 participates in isopentenyl diphosphate binding. Glu129 acts as the Proton donor in catalysis. Residue Thr167 coordinates (2E)-4-hydroxy-3-methylbut-2-enyl diphosphate. Cys197 lines the [4Fe-4S] cluster pocket. Positions 225, 226, 227, and 269 each coordinate (2E)-4-hydroxy-3-methylbut-2-enyl diphosphate. Ser225, Ser226, Asn227, and Ser269 together coordinate dimethylallyl diphosphate. 4 residues coordinate isopentenyl diphosphate: Ser225, Ser226, Asn227, and Ser269.

This sequence belongs to the IspH family. [4Fe-4S] cluster serves as cofactor.

It catalyses the reaction isopentenyl diphosphate + 2 oxidized [2Fe-2S]-[ferredoxin] + H2O = (2E)-4-hydroxy-3-methylbut-2-enyl diphosphate + 2 reduced [2Fe-2S]-[ferredoxin] + 2 H(+). The catalysed reaction is dimethylallyl diphosphate + 2 oxidized [2Fe-2S]-[ferredoxin] + H2O = (2E)-4-hydroxy-3-methylbut-2-enyl diphosphate + 2 reduced [2Fe-2S]-[ferredoxin] + 2 H(+). Its pathway is isoprenoid biosynthesis; dimethylallyl diphosphate biosynthesis; dimethylallyl diphosphate from (2E)-4-hydroxy-3-methylbutenyl diphosphate: step 1/1. It participates in isoprenoid biosynthesis; isopentenyl diphosphate biosynthesis via DXP pathway; isopentenyl diphosphate from 1-deoxy-D-xylulose 5-phosphate: step 6/6. Its function is as follows. Catalyzes the conversion of 1-hydroxy-2-methyl-2-(E)-butenyl 4-diphosphate (HMBPP) into a mixture of isopentenyl diphosphate (IPP) and dimethylallyl diphosphate (DMAPP). Acts in the terminal step of the DOXP/MEP pathway for isoprenoid precursor biosynthesis. This Wolbachia sp. subsp. Brugia malayi (strain TRS) protein is 4-hydroxy-3-methylbut-2-enyl diphosphate reductase.